The primary structure comprises 351 residues: UDP-N-acetylglucosamine--N-acetylmuramyl-(pentapeptide) pyrophosphoryl-undecaprenol N-acetylglucosamine transferase (351 aa).

UDP-N-acetyl-alpha-D-glucosamine contacts are provided by residues 13-15 (TGG), Asn125, Arg161, Ser189, Ile241, 260-265 (ALTVCE), and Gln285.

Belongs to the glycosyltransferase 28 family. MurG subfamily.

The protein resides in the cell inner membrane. The enzyme catalyses di-trans,octa-cis-undecaprenyl diphospho-N-acetyl-alpha-D-muramoyl-L-alanyl-D-glutamyl-meso-2,6-diaminopimeloyl-D-alanyl-D-alanine + UDP-N-acetyl-alpha-D-glucosamine = di-trans,octa-cis-undecaprenyl diphospho-[N-acetyl-alpha-D-glucosaminyl-(1-&gt;4)]-N-acetyl-alpha-D-muramoyl-L-alanyl-D-glutamyl-meso-2,6-diaminopimeloyl-D-alanyl-D-alanine + UDP + H(+). The protein operates within cell wall biogenesis; peptidoglycan biosynthesis. Its function is as follows. Cell wall formation. Catalyzes the transfer of a GlcNAc subunit on undecaprenyl-pyrophosphoryl-MurNAc-pentapeptide (lipid intermediate I) to form undecaprenyl-pyrophosphoryl-MurNAc-(pentapeptide)GlcNAc (lipid intermediate II). This Haemophilus influenzae (strain 86-028NP) protein is UDP-N-acetylglucosamine--N-acetylmuramyl-(pentapeptide) pyrophosphoryl-undecaprenol N-acetylglucosamine transferase.